Here is a 282-residue protein sequence, read N- to C-terminus: Adenosylcobinamide-GDP ribazoletransferase (282 aa).

Transmembrane regions (helical) follow at residues 47 to 67 (GVGI…QALL), 72 to 92 (FTPL…TGGF), 124 to 144 (AFGA…LAML), 167 to 187 (AALL…IWLL), 208 to 228 (GSLL…GLAL), and 231 to 251 (ISLI…GALF).

Belongs to the CobS family. Mg(2+) is required as a cofactor.

It localises to the cell inner membrane. It catalyses the reaction alpha-ribazole + adenosylcob(III)inamide-GDP = adenosylcob(III)alamin + GMP + H(+). It carries out the reaction alpha-ribazole 5'-phosphate + adenosylcob(III)inamide-GDP = adenosylcob(III)alamin 5'-phosphate + GMP + H(+). It participates in cofactor biosynthesis; adenosylcobalamin biosynthesis; adenosylcobalamin from cob(II)yrinate a,c-diamide: step 7/7. Functionally, joins adenosylcobinamide-GDP and alpha-ribazole to generate adenosylcobalamin (Ado-cobalamin). Also synthesizes adenosylcobalamin 5'-phosphate from adenosylcobinamide-GDP and alpha-ribazole 5'-phosphate. This chain is Adenosylcobinamide-GDP ribazoletransferase, found in Polaromonas sp. (strain JS666 / ATCC BAA-500).